Consider the following 339-residue polypeptide: uncharacterized protein (339 aa).

The N-terminal stretch at 1-29 (MIKQVCKNITICSLALSTALTVFPASSYA) is a signal peptide.

It belongs to the aerolysin family.

This is an uncharacterized protein from Staphylococcus aureus (strain MRSA252).